The following is a 207-amino-acid chain: Mediator of RNA polymerase II transcription subunit 21 (207 aa).

The interval 37–121 (PHPDVPDAAP…PDSPRTFASR (85 aa)) is disordered. Residues 65–80 (PVPAQSQASPPAQNPA) show a composition bias toward low complexity. The span at 84–96 (AGAGTSVGEGGQT) shows a compositional bias: gly residues. The segment covering 97–108 (PGPAAGAGADPN) has biased composition (low complexity). The stretch at 146–196 (IDSSEAEQEKRIRELEGELRRVEEERELKMRELKRLRRTLENVLRAVETGL) forms a coiled coil.

This sequence belongs to the Mediator complex subunit 21 family. In terms of assembly, component of the Mediator complex.

It is found in the nucleus. Functionally, component of the Mediator complex, a coactivator involved in the regulated transcription of nearly all RNA polymerase II-dependent genes. Mediator functions as a bridge to convey information from gene-specific regulatory proteins to the basal RNA polymerase II transcription machinery. Mediator is recruited to promoters by direct interactions with regulatory proteins and serves as a scaffold for the assembly of a functional preinitiation complex with RNA polymerase II and the general transcription factors. The chain is Mediator of RNA polymerase II transcription subunit 21 (srb7) from Neosartorya fischeri (strain ATCC 1020 / DSM 3700 / CBS 544.65 / FGSC A1164 / JCM 1740 / NRRL 181 / WB 181) (Aspergillus fischerianus).